We begin with the raw amino-acid sequence, 1341 residues long: DNA-directed RNA polymerase subunit beta (1341 aa).

It belongs to the RNA polymerase beta chain family. In terms of assembly, the RNAP catalytic core consists of 2 alpha, 1 beta, 1 beta' and 1 omega subunit. When a sigma factor is associated with the core the holoenzyme is formed, which can initiate transcription.

It carries out the reaction RNA(n) + a ribonucleoside 5'-triphosphate = RNA(n+1) + diphosphate. Functionally, DNA-dependent RNA polymerase catalyzes the transcription of DNA into RNA using the four ribonucleoside triphosphates as substrates. In Vibrio cholerae serotype O1 (strain ATCC 39315 / El Tor Inaba N16961), this protein is DNA-directed RNA polymerase subunit beta.